The sequence spans 218 residues: Embryonic polyadenylate-binding protein 2-A (218 aa).

A compositionally biased stretch (basic and acidic residues) spans 1-16; sequence MSERVSEEPGLDKGDG. 2 disordered regions span residues 1-26 and 169-218; these read MSER…DDPE and RTNM…NHPY. The RRM domain maps to 93-170; the sequence is RSVYVGNVDY…RTIKVLPKRT (78 aa). Residues 205–218 are compositionally biased toward low complexity; that stretch reads FRGCGRPGPLNHPY.

The protein resides in the cytoplasm. In terms of biological role, binds the poly(A) tail of mRNA. Unable to interact with the cap-binding complex and is therefore unlikely to be involved in translation initiation. This chain is Embryonic polyadenylate-binding protein 2-A (Pabpn1l-a), found in Xenopus laevis (African clawed frog).